The sequence spans 326 residues: Hairy/enhancer-of-split related with YRPW motif-like protein (326 aa).

A disordered region spans residues 1–56 (MKRPRAPSGSDGESDGPIDVGQENDLSQMARPLTTPSPSQMQARKKRRGIIEKRRR). The segment at 42–111 (QARKKRRGII…GGTGFFDARA (70 aa)) is transcriptional repression and interaction with NCOR1 and SIN3A. The bHLH domain maps to 43–98 (ARKKRRGIIEKRRRDRINSSLSELRRLVPTAFEKQGSSKLEKAEVLQMTVDHLKML). Residues 116–153 (FRSIGFRECLTEVIRYLGVLEGPSSHADPVRIRLLSHL) enclose the Orange domain. 2 disordered regions span residues 223–260 (HRPA…PPPT) and 272–306 (PIPP…PTGR). Positions 292–305 (SGSISSPCPSGPTG) are enriched in low complexity.

This sequence belongs to the HEY family. In terms of assembly, interacts with HES1, HDAC1, NCOR1 and SIN3A. Self-associates. Interacts with GATA4, GATA6, HEY1 and HEY2. In terms of tissue distribution, expressed in heart and at lower levels in brain, lung, muscle, ovary and testis.

It localises to the nucleus. Functionally, transcriptional repressor which binds preferentially to the canonical E box sequence 5'-CACGTG-3'. Downstream effector of Notch signaling required for cardiovascular development. Specifically required for the Notch-induced endocardial epithelial to mesenchymal transition, which is itself criticial for cardiac valve and septum development. Represses transcription by the cardiac transcriptional activators GATA4 and GATA6. In Mus musculus (Mouse), this protein is Hairy/enhancer-of-split related with YRPW motif-like protein (Heyl).